The chain runs to 280 residues: Acetylglutamate kinase (280 aa).

Substrate contacts are provided by residues 64 to 65, arginine 86, and asparagine 177; that span reads GG.

This sequence belongs to the acetylglutamate kinase family. ArgB subfamily.

The protein localises to the cytoplasm. It carries out the reaction N-acetyl-L-glutamate + ATP = N-acetyl-L-glutamyl 5-phosphate + ADP. It functions in the pathway amino-acid biosynthesis; L-arginine biosynthesis; N(2)-acetyl-L-ornithine from L-glutamate: step 2/4. Its function is as follows. Catalyzes the ATP-dependent phosphorylation of N-acetyl-L-glutamate. In Nautilia profundicola (strain ATCC BAA-1463 / DSM 18972 / AmH), this protein is Acetylglutamate kinase.